Reading from the N-terminus, the 364-residue chain is Chorismate synthase (364 aa).

NADP(+) contacts are provided by Arg48 and Arg54. FMN-binding positions include 125 to 127 (RSS), 238 to 239 (NA), Gly278, 293 to 297 (KPTSS), and Arg319.

It belongs to the chorismate synthase family. Homotetramer. It depends on FMNH2 as a cofactor.

It carries out the reaction 5-O-(1-carboxyvinyl)-3-phosphoshikimate = chorismate + phosphate. The protein operates within metabolic intermediate biosynthesis; chorismate biosynthesis; chorismate from D-erythrose 4-phosphate and phosphoenolpyruvate: step 7/7. Catalyzes the anti-1,4-elimination of the C-3 phosphate and the C-6 proR hydrogen from 5-enolpyruvylshikimate-3-phosphate (EPSP) to yield chorismate, which is the branch point compound that serves as the starting substrate for the three terminal pathways of aromatic amino acid biosynthesis. This reaction introduces a second double bond into the aromatic ring system. This is Chorismate synthase from Shewanella woodyi (strain ATCC 51908 / MS32).